The sequence spans 427 residues: ATP-dependent RNA helicase DDX39A (427 aa).

The segment covering 1–19 (MAEQDVENDLLDYDEEEEP) has biased composition (acidic residues). A disordered region spans residues 1–34 (MAEQDVENDLLDYDEEEEPQAPQESTPAPPKKDI). Residue alanine 2 is modified to N-acetylalanine. Lysine 31 participates in a covalent cross-link: Glycyl lysine isopeptide (Lys-Gly) (interchain with G-Cter in SUMO2). Position 35 is an N6-acetyllysine; alternate (lysine 35). Residue lysine 35 forms a Glycyl lysine isopeptide (Lys-Gly) (interchain with G-Cter in SUMO2); alternate linkage. Phosphoserine is present on serine 37. The Q motif motif lies at 44–72 (SGFRDFLLKPELLRAIVDCGFEHPSEVQH). In terms of domain architecture, Helicase ATP-binding spans 75–248 (IPQAILGMDV…RKFMQDPMEV (174 aa)). 88 to 95 (AKSGMGKT) is a binding site for ATP. Residues lysine 154 and lysine 162 each participate in a glycyl lysine isopeptide (Lys-Gly) (interchain with G-Cter in SUMO2) cross-link. The residue at position 171 (threonine 171) is a Phosphothreonine. The short motif at 195–198 (DECD) is the DECD box element. Residues lysine 240 and lysine 255 each participate in a glycyl lysine isopeptide (Lys-Gly) (interchain with G-Cter in SUMO2) cross-link. In terms of domain architecture, Helicase C-terminal spans 260–421 (GLQQYYVKLK…ELPEEIDIST (162 aa)). The residue at position 426 (serine 426) is a Phosphoserine.

Belongs to the DEAD box helicase family. DECD subfamily. As to quaternary structure, binds ALYREF/THOC4 and DDX39B/BAT1. Interacts with the apo-AREX complex component SARNP. Interacts with MX1. Interacts with MCM3AP isoform GANP. Interacts with ECD. Interacts with PHAX; this interaction stimulates PHAX RNA binding activity. (Microbial infection) Interacts with human cytomegalovirus/HHV-5 protein UL69. SUMOylated by RANBP2; SUMOylation modification affects its ability to bind RNA. As to expression, detected in testis, and at lower levels in brain, kidney, lung, thymus, spleen and salivary gland.

It localises to the nucleus. It is found in the cytoplasm. The catalysed reaction is ATP + H2O = ADP + phosphate + H(+). In terms of biological role, helicase that plays an essential role in mRNA export and is involved in multiple steps in RNA metabolism including alternative splicing. Regulates nuclear mRNA export to the cytoplasm through association with ECD. Also involved in spliceosomal uridine-rich small nuclear RNA (U snRNA) export by stimulating the RNA binding of adapter PHAX. Plays a role in the negative regulation of type I IFN production by increasing the nuclear retention of antiviral transcripts and thus reducing their protein expression. Independently of the interferon pathway, plays an antiviral role against alphaviruses by binding to a 5' conserved sequence element in the viral genomic RNA. This chain is ATP-dependent RNA helicase DDX39A (DDX39A), found in Homo sapiens (Human).